A 200-amino-acid chain; its full sequence is Recombination protein RecR (200 aa).

Residues 57–72 (CRQCRTLTEQELCPQC) form a C4-type zinc finger. The region spanning 80 to 175 (TQLCVVEGPV…TATRIAHGVP (96 aa)) is the Toprim domain.

Belongs to the RecR family.

May play a role in DNA repair. It seems to be involved in an RecBC-independent recombinational process of DNA repair. It may act with RecF and RecO. In Pseudomonas entomophila (strain L48), this protein is Recombination protein RecR.